Reading from the N-terminus, the 558-residue chain is Vanin-like protein 1 (558 aa).

An N-terminal signal peptide occupies residues 1–22 (MSNTWWWLSVVLLILGLMPGMS). Positions 33–299 (YTAGVVEFKQ…RAIYVAQVPK (267 aa)) constitute a CN hydrolase domain. The N-linked (GlcNAc...) asparagine glycan is linked to asparagine 65. The active-site Proton acceptor is glutamate 76. Asparagine 103, asparagine 120, and asparagine 128 each carry an N-linked (GlcNAc...) asparagine glycan. Lysine 171 (proton donor) is an active-site residue. Asparagine 180 carries an N-linked (GlcNAc...) asparagine glycan. The Nucleophile role is filled by cysteine 203. Residues asparagine 354 and asparagine 379 are each glycosylated (N-linked (GlcNAc...) asparagine). Serine 531 carries GPI-anchor amidated serine lipidation. A propeptide spans 532–558 (GSPGLRILGGWLAMPLIILAIARTMSS) (removed in mature form).

The protein belongs to the carbon-nitrogen hydrolase superfamily. BTD/VNN family. In terms of tissue distribution, expressed in larvae and early pupae. Expressed in third instar larvae.

The protein localises to the cell membrane. This chain is Vanin-like protein 1, found in Drosophila melanogaster (Fruit fly).